We begin with the raw amino-acid sequence, 292 residues long: 33 kDa chaperonin (292 aa).

2 cysteine pairs are disulfide-bonded: C238-C240 and C271-C274.

This sequence belongs to the HSP33 family. Post-translationally, under oxidizing conditions two disulfide bonds are formed involving the reactive cysteines. Under reducing conditions zinc is bound to the reactive cysteines and the protein is inactive.

It localises to the cytoplasm. Its function is as follows. Redox regulated molecular chaperone. Protects both thermally unfolding and oxidatively damaged proteins from irreversible aggregation. Plays an important role in the bacterial defense system toward oxidative stress. The sequence is that of 33 kDa chaperonin from Latilactobacillus sakei subsp. sakei (strain 23K) (Lactobacillus sakei subsp. sakei).